Consider the following 366-residue polypeptide: Erythronate-4-phosphate dehydrogenase (366 aa).

Residues Ser46 and Thr67 each coordinate substrate. Residues Asp147 and Thr175 each coordinate NAD(+). Residue Arg208 is part of the active site. Asp228 contributes to the NAD(+) binding site. Glu233 is a catalytic residue. Residue His250 is the Proton donor of the active site. NAD(+) is bound at residue Gly253. Tyr254 lines the substrate pocket.

This sequence belongs to the D-isomer specific 2-hydroxyacid dehydrogenase family. PdxB subfamily. In terms of assembly, homodimer.

It localises to the cytoplasm. It catalyses the reaction 4-phospho-D-erythronate + NAD(+) = (R)-3-hydroxy-2-oxo-4-phosphooxybutanoate + NADH + H(+). Its pathway is cofactor biosynthesis; pyridoxine 5'-phosphate biosynthesis; pyridoxine 5'-phosphate from D-erythrose 4-phosphate: step 2/5. Functionally, catalyzes the oxidation of erythronate-4-phosphate to 3-hydroxy-2-oxo-4-phosphonooxybutanoate. This chain is Erythronate-4-phosphate dehydrogenase, found in Coxiella burnetii (strain RSA 331 / Henzerling II).